The primary structure comprises 75 residues: Iota-conotoxin-like R11.3 (75 aa).

The first 19 residues, 1-19, serve as a signal peptide directing secretion; it reads MKLCLTFLLVLMILASVTG. A propeptide spanning residues 20-34 is cleaved from the precursor; sequence EKLSEQTLRRAARKN. Disulfide bonds link Cys-39-Cys-53, Cys-46-Cys-58, Cys-52-Cys-63, and Cys-57-Cys-70.

This sequence belongs to the conotoxin I1 superfamily. As to expression, expressed by the venom duct.

Its subcellular location is the secreted. In terms of biological role, iota-conotoxins bind to voltage-gated sodium channels (Nav) and act as agonists by shifting the voltage-dependence of activation to more hyperpolarized levels. Produces general excitatory symptoms. The protein is Iota-conotoxin-like R11.3 of Conus radiatus (Rayed cone).